The chain runs to 370 residues: GTPase Obg (370 aa).

Residues 1 to 159 enclose the Obg domain; that stretch reads MKFVDEAYID…KKLKLELRVL (159 aa). One can recognise an OBG-type G domain in the interval 160-333; sequence ADVGLLGMPN…LVQAIYQHVA (174 aa). GTP contacts are provided by residues 166-173, 191-195, 213-216, 283-286, and 314-316; these read GMPNAGKS, FTTLH, DVPG, NKLD, and SAL. Mg(2+)-binding residues include Ser173 and Thr193. The segment at 346 to 370 is disordered; it reads FAEPEADESDDEPRFAPQADDPRFR.

Belongs to the TRAFAC class OBG-HflX-like GTPase superfamily. OBG GTPase family. Monomer. The cofactor is Mg(2+).

The protein resides in the cytoplasm. Functionally, an essential GTPase which binds GTP, GDP and possibly (p)ppGpp with moderate affinity, with high nucleotide exchange rates and a fairly low GTP hydrolysis rate. Plays a role in control of the cell cycle, stress response, ribosome biogenesis and in those bacteria that undergo differentiation, in morphogenesis control. This Methylibium petroleiphilum (strain ATCC BAA-1232 / LMG 22953 / PM1) protein is GTPase Obg.